The chain runs to 707 residues: NADP(+)-dependent formate dehydrogenase subunit beta (707 aa).

In terms of assembly, heterotetramer composed of two alpha (FdhA) and two beta (FdhB) subunits.

It is found in the cytoplasm. The enzyme catalyses formate + NADP(+) = CO2 + NADPH. Its activity is regulated as follows. Activity is very sensitive to oxygen. The activity in growing cells is enhanced when selenite and molybdate are added together to the growth medium. Tungstate replaces and is better than molybdate. Selenite is incorporated into the enzyme. Requires a sulfhydryl compound for activity. Inhibited by cyanide, EDTA, hypophosphite and mercaptoethanol. Sulfite inhibits the activity with NADP but not with methyl viologen as electron acceptor. Its function is as follows. Component of a dehydrogenase that catalyzes the NADP-dependent reduction of CO(2) to formate, the first step in the synthesis of the methyl group of acetate during synthesis of acetate from CO(2). In vitro, can use methyl viologen and benzyl viologen in addition to its natural electron acceptor. The protein is NADP(+)-dependent formate dehydrogenase subunit beta of Moorella thermoacetica (Clostridium thermoaceticum).